The primary structure comprises 101 residues: Small ribosomal subunit protein uS14 (101 aa).

The protein belongs to the universal ribosomal protein uS14 family. Part of the 30S ribosomal subunit. Contacts proteins S3 and S10.

Binds 16S rRNA, required for the assembly of 30S particles and may also be responsible for determining the conformation of the 16S rRNA at the A site. This Francisella tularensis subsp. holarctica (strain FTNF002-00 / FTA) protein is Small ribosomal subunit protein uS14.